A 354-amino-acid chain; its full sequence is Uroporphyrinogen decarboxylase (354 aa).

Residues 27-31, Phe46, Asp77, Tyr153, Thr208, and His326 contribute to the substrate site; that span reads RQAGR.

It belongs to the uroporphyrinogen decarboxylase family. In terms of assembly, homodimer.

It localises to the cytoplasm. The catalysed reaction is uroporphyrinogen III + 4 H(+) = coproporphyrinogen III + 4 CO2. It participates in porphyrin-containing compound metabolism; protoporphyrin-IX biosynthesis; coproporphyrinogen-III from 5-aminolevulinate: step 4/4. In terms of biological role, catalyzes the decarboxylation of four acetate groups of uroporphyrinogen-III to yield coproporphyrinogen-III. The polypeptide is Uroporphyrinogen decarboxylase (Neisseria meningitidis serogroup A / serotype 4A (strain DSM 15465 / Z2491)).